A 364-amino-acid polypeptide reads, in one-letter code: Anhydro-N-acetylmuramic acid kinase (364 aa).

11 to 18 (GSSLDGID) is a binding site for ATP.

This sequence belongs to the anhydro-N-acetylmuramic acid kinase family.

It catalyses the reaction 1,6-anhydro-N-acetyl-beta-muramate + ATP + H2O = N-acetyl-D-muramate 6-phosphate + ADP + H(+). It functions in the pathway amino-sugar metabolism; 1,6-anhydro-N-acetylmuramate degradation. The protein operates within cell wall biogenesis; peptidoglycan recycling. In terms of biological role, catalyzes the specific phosphorylation of 1,6-anhydro-N-acetylmuramic acid (anhMurNAc) with the simultaneous cleavage of the 1,6-anhydro ring, generating MurNAc-6-P. Is required for the utilization of anhMurNAc either imported from the medium or derived from its own cell wall murein, and thus plays a role in cell wall recycling. This is Anhydro-N-acetylmuramic acid kinase from Pseudomonas savastanoi pv. phaseolicola (strain 1448A / Race 6) (Pseudomonas syringae pv. phaseolicola (strain 1448A / Race 6)).